The sequence spans 201 residues: Small ribosomal subunit protein uS5 (201 aa).

Positions 1 to 28 (MARGEQQRGEGGQRRDRRDRNAPEERVD) are disordered. In terms of domain architecture, S5 DRBM spans 31–94 (IVEKLVHINR…EEAKKTMIRV (64 aa)). The segment at 173 to 201 (QIAAKRGKKVGDILGRRADGASAPEAIEG) is disordered. Positions 181–191 (KVGDILGRRAD) are enriched in basic and acidic residues.

The protein belongs to the universal ribosomal protein uS5 family. As to quaternary structure, part of the 30S ribosomal subunit. Contacts proteins S4 and S8.

In terms of biological role, with S4 and S12 plays an important role in translational accuracy. Functionally, located at the back of the 30S subunit body where it stabilizes the conformation of the head with respect to the body. This Caulobacter vibrioides (strain ATCC 19089 / CIP 103742 / CB 15) (Caulobacter crescentus) protein is Small ribosomal subunit protein uS5.